Here is a 284-residue protein sequence, read N- to C-terminus: Tropomyosin alpha-1 chain (284 aa).

Positions 1-37 (MDAIKKKMQMLKLDKENALDRAEQAETDKKAAEERSK) are disordered. The stretch at 1–284 (MDAIKKKMQM…DHALNDMTSI (284 aa)) forms a coiled coil. The span at 12–37 (KLDKENALDRAEQAETDKKAAEERSK) shows a compositional bias: basic and acidic residues.

Belongs to the tropomyosin family. Homodimer. Heterodimer of an alpha (TPM1, TPM3 or TPM4) and a beta (TPM2) chain.

It is found in the cytoplasm. It localises to the cytoskeleton. In terms of biological role, binds to actin filaments in muscle and non-muscle cells. Plays a central role, in association with the troponin complex, in the calcium dependent regulation of vertebrate striated muscle contraction. Smooth muscle contraction is regulated by interaction with caldesmon. In non-muscle cells is implicated in stabilizing cytoskeleton actin filaments. The protein is Tropomyosin alpha-1 chain (tpma) of Danio rerio (Zebrafish).